Reading from the N-terminus, the 618-residue chain is Proline--tRNA ligase (618 aa).

It belongs to the class-II aminoacyl-tRNA synthetase family. ProS type 1 subfamily. In terms of assembly, homodimer.

It localises to the cytoplasm. It catalyses the reaction tRNA(Pro) + L-proline + ATP = L-prolyl-tRNA(Pro) + AMP + diphosphate. Its function is as follows. Catalyzes the attachment of proline to tRNA(Pro) in a two-step reaction: proline is first activated by ATP to form Pro-AMP and then transferred to the acceptor end of tRNA(Pro). As ProRS can inadvertently accommodate and process non-cognate amino acids such as alanine and cysteine, to avoid such errors it has two additional distinct editing activities against alanine. One activity is designated as 'pretransfer' editing and involves the tRNA(Pro)-independent hydrolysis of activated Ala-AMP. The other activity is designated 'posttransfer' editing and involves deacylation of mischarged Ala-tRNA(Pro). The misacylated Cys-tRNA(Pro) is not edited by ProRS. This Streptococcus pyogenes serotype M12 (strain MGAS2096) protein is Proline--tRNA ligase.